The following is a 213-amino-acid chain: ATP phosphoribosyltransferase (213 aa).

The protein belongs to the ATP phosphoribosyltransferase family. Short subfamily. In terms of assembly, heteromultimer composed of HisG and HisZ subunits.

The protein localises to the cytoplasm. The enzyme catalyses 1-(5-phospho-beta-D-ribosyl)-ATP + diphosphate = 5-phospho-alpha-D-ribose 1-diphosphate + ATP. It functions in the pathway amino-acid biosynthesis; L-histidine biosynthesis; L-histidine from 5-phospho-alpha-D-ribose 1-diphosphate: step 1/9. Its function is as follows. Catalyzes the condensation of ATP and 5-phosphoribose 1-diphosphate to form N'-(5'-phosphoribosyl)-ATP (PR-ATP). Has a crucial role in the pathway because the rate of histidine biosynthesis seems to be controlled primarily by regulation of HisG enzymatic activity. The chain is ATP phosphoribosyltransferase from Bacillus licheniformis (strain ATCC 14580 / DSM 13 / JCM 2505 / CCUG 7422 / NBRC 12200 / NCIMB 9375 / NCTC 10341 / NRRL NRS-1264 / Gibson 46).